The primary structure comprises 228 residues: CD9 antigen (228 aa).

The Cytoplasmic segment spans residues 1–12 (MPVKGGTKCIKY). The S-palmitoyl cysteine moiety is linked to residue Cys9. Residues 13–33 (LLFGFNFIFWLAGIAVLAIGL) form a helical membrane-spanning segment. Residues 34–55 (WLRFDSQTKSIFEQETNNNNSS) lie on the Extracellular side of the membrane. Residues Asn52 and Asn53 are each glycosylated (N-linked (GlcNAc...) asparagine). The helical transmembrane segment at 56 to 76 (FYTGVYILIGAGALMMLVGFL) threads the bilayer. Over 77-87 (GCCGAVQESQC) the chain is Cytoplasmic. 3 S-palmitoyl cysteine lipidation sites follow: Cys78, Cys79, and Cys87. A helical membrane pass occupies residues 88–111 (MLGLFFGFLLVIFAIEIAAAIWGY). Topologically, residues 112–195 (SHKDEVIKEV…KEVFDNKFHI (84 aa)) are extracellular. 2 disulfides stabilise this stretch: Cys152-Cys181 and Cys153-Cys167. The chain crosses the membrane as a helical span at residues 196–221 (IGAVGIGIAVVMIFGMIFSMILCCAI). 2 S-palmitoyl cysteine lipidation sites follow: Cys218 and Cys219. Topologically, residues 222-228 (RRNREMV) are cytoplasmic.

The protein belongs to the tetraspanin (TM4SF) family. As to quaternary structure, forms both disulfide-linked homodimers and higher homooligomers as well as heterooligomers with other members of the tetraspanin family. Interacts (via the second extracellular domain) with integrin ITGAV:ITGB3. Interacts with integrin ITGA6:ITGB1; interaction takes place in oocytes and is involved in sperm-egg fusion. Part of integrin-tetraspanin complexes composed of CD81, beta-1 and beta-2 integrins in the membrane of monocyte/macrophages. Interacts with CD63; identified in a complex with CD63 and ITGB3. Associates with CR2/CD21 and with PTGFRN/CD9P1. Part of a complex composed of CD9, CD81, PTGFRN and IGSF8. Interacts directly with IGSF8. Interacts with PDPN; this interaction is homophilic and attenuates platelet aggregation and pulmonary metastasis induced by PDPN. Interacts (on T cell side) with CD81 at immunological synapses between antigen-presenting cells and T cells. In terms of processing, palmitoylated at a low, basal level in unstimulated platelets. The level of palmitoylation increases when platelets are activated by thrombin (in vitro). The protein exists in three forms with molecular masses between 22 and 27 kDa, and is known to carry covalently linked fatty acids. Palmitoylation by ZDHHC2 regulates CD9 expression, association with other tetraspanin family proteins and function in cell adhesion.

It localises to the cell membrane. It is found in the membrane. The protein localises to the secreted. Its subcellular location is the extracellular exosome. Its function is as follows. Integral membrane protein associated with integrins, which regulates different processes, such as sperm-egg fusion, platelet activation and aggregation, and cell adhesion. Present at the cell surface of oocytes and plays a key role in sperm-egg fusion, possibly by organizing multiprotein complexes and the morphology of the membrane required for the fusion. In myoblasts, associates with CD81 and PTGFRN and inhibits myotube fusion during muscle regeneration. In macrophages, associates with CD81 and beta-1 and beta-2 integrins, and prevents macrophage fusion into multinucleated giant cells specialized in ingesting complement-opsonized large particles. Also prevents the fusion between mononuclear cell progenitors into osteoclasts in charge of bone resorption. Acts as a receptor for PSG17. Involved in platelet activation and aggregation. Regulates paranodal junction formation. Involved in cell adhesion, cell motility and tumor metastasis. In Chlorocebus aethiops (Green monkey), this protein is CD9 antigen.